The chain runs to 225 residues: Uracil-DNA glycosylase (225 aa).

D65 serves as the catalytic Proton acceptor.

It belongs to the uracil-DNA glycosylase (UDG) superfamily. UNG family.

It is found in the cytoplasm. It catalyses the reaction Hydrolyzes single-stranded DNA or mismatched double-stranded DNA and polynucleotides, releasing free uracil.. Excises uracil residues from the DNA which can arise as a result of misincorporation of dUMP residues by DNA polymerase or due to deamination of cytosine. This chain is Uracil-DNA glycosylase, found in Clostridium perfringens (strain 13 / Type A).